We begin with the raw amino-acid sequence, 504 residues long: Calcium/calmodulin-dependent protein kinase type II (504 aa).

Residues tyrosine 65 to isoleucine 351 form the Protein kinase domain. Residues leucine 71–valine 79 and lysine 94 contribute to the ATP site. Residue aspartate 188 is the Proton acceptor of the active site. The residue at position 252 (threonine 252) is a Phosphothreonine.

The protein belongs to the protein kinase superfamily. CAMK Ser/Thr protein kinase family. CaMK subfamily. Interacts with sty1. It depends on Mg(2+) as a cofactor. Autophosphorylated.

The protein resides in the cytoplasm. The protein localises to the barrier septum. It localises to the forespore membrane. Its subcellular location is the ascus epiplasm. It catalyses the reaction L-seryl-[protein] + ATP = O-phospho-L-seryl-[protein] + ADP + H(+). It carries out the reaction L-threonyl-[protein] + ATP = O-phospho-L-threonyl-[protein] + ADP + H(+). In terms of biological role, has a role in the regulation of G2/M transition during the mitotic cell cycle. The protein is Calcium/calmodulin-dependent protein kinase type II of Schizosaccharomyces pombe (strain 972 / ATCC 24843) (Fission yeast).